Here is a 428-residue protein sequence, read N- to C-terminus: Adenylosuccinate synthetase (428 aa).

GTP is bound by residues 11 to 17 (GDEGKGK) and 39 to 41 (GHT). Asp12 serves as the catalytic Proton acceptor. Residues Asp12 and Gly39 each coordinate Mg(2+). IMP is bound by residues 12-15 (DEGK), 37-40 (NAGH), Thr130, Arg144, Asn226, Thr241, and Arg305. His40 (proton donor) is an active-site residue. Residue 301–307 (VTTGRKR) participates in substrate binding. GTP contacts are provided by residues Arg307, 333 to 335 (KLD), and 415 to 417 (GTG).

Belongs to the adenylosuccinate synthetase family. As to quaternary structure, homodimer. Requires Mg(2+) as cofactor.

The protein localises to the cytoplasm. It catalyses the reaction IMP + L-aspartate + GTP = N(6)-(1,2-dicarboxyethyl)-AMP + GDP + phosphate + 2 H(+). The protein operates within purine metabolism; AMP biosynthesis via de novo pathway; AMP from IMP: step 1/2. Functionally, plays an important role in the de novo pathway and in the salvage pathway of purine nucleotide biosynthesis. Catalyzes the first committed step in the biosynthesis of AMP from IMP. This is Adenylosuccinate synthetase from Candida albicans (strain SC5314 / ATCC MYA-2876) (Yeast).